We begin with the raw amino-acid sequence, 49 residues long: Small, acid-soluble spore protein O (49 aa).

Residues 1-49 (MVKRKANHVIPGMNDASAQGKGAGYNEELSNEPLTEAQKQNNKKRKKNQ) form a disordered region.

This sequence belongs to the SspO family.

It localises to the spore core. This Anoxybacillus flavithermus (strain DSM 21510 / WK1) protein is Small, acid-soluble spore protein O.